Here is a 544-residue protein sequence, read N- to C-terminus: Methionine--tRNA ligase 2 (544 aa).

A 'HIGH' region motif is present at residues 10–20 (PYANGSLHLGH). Cys141, Cys144, Cys153, and Cys156 together coordinate Zn(2+). The 'KMSKS' region signature appears at 329–333 (KLSTS). Thr332 provides a ligand contact to ATP.

Belongs to the class-I aminoacyl-tRNA synthetase family. MetG type 1 subfamily. In terms of assembly, monomer. Zn(2+) serves as cofactor.

The protein resides in the cytoplasm. The catalysed reaction is tRNA(Met) + L-methionine + ATP = L-methionyl-tRNA(Met) + AMP + diphosphate. Functionally, is required not only for elongation of protein synthesis but also for the initiation of all mRNA translation through initiator tRNA(fMet) aminoacylation. This is Methionine--tRNA ligase 2 from Bacillus anthracis.